Reading from the N-terminus, the 249-residue chain is Probable transcriptional regulatory protein Wbm0670 (249 aa).

This sequence belongs to the TACO1 family.

The protein localises to the cytoplasm. This Wolbachia sp. subsp. Brugia malayi (strain TRS) protein is Probable transcriptional regulatory protein Wbm0670.